The sequence spans 790 residues: Lon protease 2 (790 aa).

Positions 18-210 constitute a Lon N-terminal domain; the sequence is LRILPLRNMV…HVTFYMTRQL (193 aa). Position 362-369 (362-369) interacts with ATP; it reads GPPGVGKT. The Lon proteolytic domain maps to 598–779; that stretch reads SWGCGIATGL…SDVLQLALLP (182 aa). Catalysis depends on residues S685 and K728.

It belongs to the peptidase S16 family. As to quaternary structure, homohexamer. Organized in a ring with a central cavity.

It localises to the cytoplasm. The enzyme catalyses Hydrolysis of proteins in presence of ATP.. In terms of biological role, ATP-dependent serine protease that mediates the selective degradation of mutant and abnormal proteins as well as certain short-lived regulatory proteins. Required for cellular homeostasis and for survival from DNA damage and developmental changes induced by stress. Degrades polypeptides processively to yield small peptide fragments that are 5 to 10 amino acids long. Binds to DNA in a double-stranded, site-specific manner. This is Lon protease 2 from Syntrophobacter fumaroxidans (strain DSM 10017 / MPOB).